The sequence spans 302 residues: UDP-N-acetylenolpyruvoylglucosamine reductase (302 aa).

Residues 32–195 enclose the FAD-binding PCMH-type domain; that stretch reads LGGPADLLAR…VTVTLELVPD (164 aa). Arg175 is a catalytic residue. The active-site Proton donor is the Ser224. The active site involves Glu294.

Belongs to the MurB family. The cofactor is FAD.

It localises to the cytoplasm. It catalyses the reaction UDP-N-acetyl-alpha-D-muramate + NADP(+) = UDP-N-acetyl-3-O-(1-carboxyvinyl)-alpha-D-glucosamine + NADPH + H(+). The protein operates within cell wall biogenesis; peptidoglycan biosynthesis. Functionally, cell wall formation. This is UDP-N-acetylenolpyruvoylglucosamine reductase from Moorella thermoacetica (strain ATCC 39073 / JCM 9320).